The chain runs to 243 residues: PF03932 family protein CutC (243 aa).

This sequence belongs to the CutC family.

It localises to the cytoplasm. The sequence is that of PF03932 family protein CutC from Histophilus somni (strain 2336) (Haemophilus somnus).